The primary structure comprises 229 residues: DNA mismatch repair protein MutH (229 aa).

Belongs to the MutH family.

Its subcellular location is the cytoplasm. Its function is as follows. Sequence-specific endonuclease that cleaves unmethylated GATC sequences. It is involved in DNA mismatch repair. This Escherichia coli O45:K1 (strain S88 / ExPEC) protein is DNA mismatch repair protein MutH.